A 278-amino-acid chain; its full sequence is Adenosylcobinamide-GDP ribazoletransferase (278 aa).

A run of 7 helical transmembrane segments spans residues alanine 31–phenylalanine 51, threonine 66–leucine 86, threonine 115–leucine 135, isoleucine 148–proline 168, aspartate 187–phenylalanine 207, alanine 215–leucine 237, and isoleucine 247–isoleucine 267.

This sequence belongs to the CobS family. Mg(2+) is required as a cofactor.

It is found in the cell membrane. It catalyses the reaction alpha-ribazole + adenosylcob(III)inamide-GDP = adenosylcob(III)alamin + GMP + H(+). It carries out the reaction alpha-ribazole 5'-phosphate + adenosylcob(III)inamide-GDP = adenosylcob(III)alamin 5'-phosphate + GMP + H(+). The protein operates within cofactor biosynthesis; adenosylcobalamin biosynthesis; adenosylcobalamin from cob(II)yrinate a,c-diamide: step 7/7. Joins adenosylcobinamide-GDP and alpha-ribazole to generate adenosylcobalamin (Ado-cobalamin). Also synthesizes adenosylcobalamin 5'-phosphate from adenosylcobinamide-GDP and alpha-ribazole 5'-phosphate. This Frankia casuarinae (strain DSM 45818 / CECT 9043 / HFP020203 / CcI3) protein is Adenosylcobinamide-GDP ribazoletransferase.